The following is a 283-amino-acid chain: Probable protein phosphatase 2C 58 (283 aa).

The PPM-type phosphatase domain maps to 35-282; the sequence is THGFHCVKGK…DDISCIVVKF (248 aa). Positions 72, 73, 234, and 273 each coordinate Mn(2+).

It belongs to the PP2C family. The cofactor is Mg(2+). It depends on Mn(2+) as a cofactor.

It carries out the reaction O-phospho-L-seryl-[protein] + H2O = L-seryl-[protein] + phosphate. The catalysed reaction is O-phospho-L-threonyl-[protein] + H2O = L-threonyl-[protein] + phosphate. This chain is Probable protein phosphatase 2C 58, found in Arabidopsis thaliana (Mouse-ear cress).